Consider the following 262-residue polypeptide: Acyl-[acyl-carrier-protein]--UDP-N-acetylglucosamine O-acyltransferase (262 aa).

The protein belongs to the transferase hexapeptide repeat family. LpxA subfamily. As to quaternary structure, homotrimer.

The protein localises to the cytoplasm. It catalyses the reaction a (3R)-hydroxyacyl-[ACP] + UDP-N-acetyl-alpha-D-glucosamine = a UDP-3-O-[(3R)-3-hydroxyacyl]-N-acetyl-alpha-D-glucosamine + holo-[ACP]. The protein operates within glycolipid biosynthesis; lipid IV(A) biosynthesis; lipid IV(A) from (3R)-3-hydroxytetradecanoyl-[acyl-carrier-protein] and UDP-N-acetyl-alpha-D-glucosamine: step 1/6. Its function is as follows. Involved in the biosynthesis of lipid A, a phosphorylated glycolipid that anchors the lipopolysaccharide to the outer membrane of the cell. This is Acyl-[acyl-carrier-protein]--UDP-N-acetylglucosamine O-acyltransferase from Burkholderia multivorans (strain ATCC 17616 / 249).